Consider the following 415-residue polypeptide: DNA primase DnaG (415 aa).

Residues 171-250 (DAIIIVEGRA…AFSPRGKSVE (80 aa)) form the Toprim domain. Mg(2+) contacts are provided by glutamate 177, aspartate 219, and aspartate 221. A disordered region spans residues 280–323 (ELPGDLGGRPARTAPAHDEGGNSDTTGKQAVSQKRIRDGTSKVP). The segment covering 301–311 (NSDTTGKQAVS) has biased composition (polar residues).

It belongs to the archaeal DnaG primase family. As to quaternary structure, forms a ternary complex with MCM helicase and DNA. The cofactor is Mg(2+).

It carries out the reaction ssDNA + n NTP = ssDNA/pppN(pN)n-1 hybrid + (n-1) diphosphate.. Functionally, RNA polymerase that catalyzes the synthesis of short RNA molecules used as primers for DNA polymerase during DNA replication. The chain is DNA primase DnaG from Methanoregula boonei (strain DSM 21154 / JCM 14090 / 6A8).